The primary structure comprises 250 residues: Isoprenyl transferase (250 aa).

D27 is a catalytic residue. D27 is a Mg(2+) binding site. Residues 28 to 31 (GNRR), W32, H48, and 76 to 78 (STE) each bind substrate. N79 functions as the Proton acceptor in the catalytic mechanism. Substrate is bound by residues F80, R82, R199, and 205–207 (RVS). Mg(2+) is bound at residue E218.

The protein belongs to the UPP synthase family. Homodimer. Requires Mg(2+) as cofactor.

Its function is as follows. Catalyzes the condensation of isopentenyl diphosphate (IPP) with allylic pyrophosphates generating different type of terpenoids. This is Isoprenyl transferase from Chlamydia pneumoniae (Chlamydophila pneumoniae).